Reading from the N-terminus, the 276-residue chain is Diaminopimelate epimerase (276 aa).

Residues Asn-13, Gln-46, and Asn-66 each contribute to the substrate site. Cys-75 serves as the catalytic Proton donor. Residues 76–77 (GN), Asn-159, Asn-192, and 210–211 (ER) each bind substrate. Catalysis depends on Cys-219, which acts as the Proton acceptor. 220 to 221 (GT) is a substrate binding site.

This sequence belongs to the diaminopimelate epimerase family. In terms of assembly, homodimer.

It localises to the cytoplasm. The enzyme catalyses (2S,6S)-2,6-diaminopimelate = meso-2,6-diaminopimelate. It functions in the pathway amino-acid biosynthesis; L-lysine biosynthesis via DAP pathway; DL-2,6-diaminopimelate from LL-2,6-diaminopimelate: step 1/1. Functionally, catalyzes the stereoinversion of LL-2,6-diaminopimelate (L,L-DAP) to meso-diaminopimelate (meso-DAP), a precursor of L-lysine and an essential component of the bacterial peptidoglycan. The polypeptide is Diaminopimelate epimerase (Pseudomonas syringae pv. tomato (strain ATCC BAA-871 / DC3000)).